The chain runs to 704 residues: Meprin A subunit beta (704 aa).

Positions 1 to 20 are cleaved as a signal peptide; the sequence is MDARHQPWFLVFATFLLVSG. Residues 21–64 constitute a propeptide that is removed on maturation; that stretch reads LPAPEKFVKDIDGGIDQDIFDINQGLGLDLFEGDIKLEANGKNS. Residues 21–654 lie on the Extracellular side of the membrane; it reads LPAPEKFVKD…RCEKRGSTRD (634 aa). The Peptidase M12A domain occupies 63–257; the sequence is NSIIGDHKRW…LKLNQLYNCT (195 aa). Cystine bridges form between cysteine 104-cysteine 256, cysteine 125-cysteine 145, and cysteine 266-cysteine 428. Position 153 (histidine 153) interacts with Zn(2+). Glutamate 154 is an active-site residue. Positions 157 and 163 each coordinate Zn(2+). Residues asparagine 193, asparagine 219, asparagine 255, asparagine 316, asparagine 422, asparagine 437, asparagine 529, asparagine 548, and asparagine 593 are each glycosylated (N-linked (GlcNAc...) asparagine). Positions 261-430 constitute an MAM domain; sequence SFMDSCDFEL…INLSETRCPH (170 aa). The region spanning 431-586 is the MATH domain; the sequence is HIWHIQNFTQ…GDDIYILLTV (156 aa). In terms of domain architecture, EGF-like spans 607 to 647; sequence VHNACSEVVCQNGGICVVQDGRAECKCPAGEDWWYMGKRCE. 3 disulfide bridges follow: cysteine 611/cysteine 622, cysteine 616/cysteine 631, and cysteine 633/cysteine 646. Residues 655–678 form a helical membrane-spanning segment; it reads TVIIAVSSTVTVFAVMLIITLVSV. Residues 679–704 lie on the Cytoplasmic side of the membrane; sequence YCTRRKYRKKARANTAAMTLENQHAF. Threonine 697 carries the post-translational modification Phosphothreonine.

In terms of assembly, homotetramer consisting of disulfide-linked beta subunits, or heterotetramer of two alpha and two beta subunits formed by non-covalent association of two disulfide-linked heterodimers. Interacts with MBL2 through its carbohydrate moiety. This interaction may inhibit its catalytic activity. Interacts with TSPAN8. Zn(2+) is required as a cofactor. Post-translationally, proteolytically activated by trypsin in the intestinal lumen and kallikrein-related peptidases in other tissues. In terms of processing, N-glycosylated; contains high mannose and/or complex biantennary structures. Phosphorylated by PKC at multiple sites of its cytoplasmic part. Phosphorylation dcreases activity at the cell surface, leading to diminished substrate cleavage. As to expression, isoform 1 is expressed in kidney, intestinal brush borders, and salivary ducts. Isoform 2 has been found in carcinoma cells.

Its subcellular location is the cell membrane. The protein resides in the secreted. It catalyses the reaction Hydrolysis of proteins, including azocasein, and peptides. Hydrolysis of 5-His-|-Leu-6, 6-Leu-|-Cys-7, 14-Ala-|-Leu-15 and 19-Cys-|-Gly-20 bonds in insulin B chain.. Strongly inhibited by fetuin-A/AHSG. Inhibited by cysteine and by the metal ion chelators EDTA and 1,10-phenanthroline. Not inhibited by 3,4-dichloroisocourmarin, soybean trypsin inhibitor, or the cysteine proteinase inhibitors iodoacetic acid and E-64. Functionally, membrane metallopeptidase that sheds many membrane-bound proteins. Exhibits a strong preference for acidic amino acids at the P1' position. Known substrates include: FGF19, VGFA, IL1B, IL18, procollagen I and III, E-cadherin, KLK7, gastrin, ADAM10, tenascin-C. The presence of several pro-inflammatory cytokine among substrates implicate MEP1B in inflammation. It is also involved in tissue remodeling due to its capability to degrade extracellular matrix components. The chain is Meprin A subunit beta (Mep1b) from Mus musculus (Mouse).